Here is a 330-residue protein sequence, read N- to C-terminus: Biotin synthase 2 (330 aa).

Residues 48–278 (MCGDGFDMCS…QAAIRLAGGR (231 aa)) form the Radical SAM core domain. Residues cysteine 66, cysteine 70, and cysteine 73 each contribute to the [4Fe-4S] cluster site. 4 residues coordinate [2Fe-2S] cluster: serine 111, cysteine 143, cysteine 203, and arginine 273.

The protein belongs to the radical SAM superfamily. Biotin synthase family. Homodimer. It depends on [4Fe-4S] cluster as a cofactor. [2Fe-2S] cluster is required as a cofactor.

The enzyme catalyses (4R,5S)-dethiobiotin + (sulfur carrier)-SH + 2 reduced [2Fe-2S]-[ferredoxin] + 2 S-adenosyl-L-methionine = (sulfur carrier)-H + biotin + 2 5'-deoxyadenosine + 2 L-methionine + 2 oxidized [2Fe-2S]-[ferredoxin]. Its pathway is cofactor biosynthesis; biotin biosynthesis; biotin from 7,8-diaminononanoate: step 2/2. In terms of biological role, catalyzes the conversion of dethiobiotin (DTB) to biotin by the insertion of a sulfur atom into dethiobiotin via a radical-based mechanism. This chain is Biotin synthase 2, found in Corynebacterium diphtheriae (strain ATCC 700971 / NCTC 13129 / Biotype gravis).